The primary structure comprises 294 residues: 33 kDa chaperonin (294 aa).

2 cysteine pairs are disulfide-bonded: C239–C241 and C272–C275.

Belongs to the HSP33 family. Post-translationally, under oxidizing conditions two disulfide bonds are formed involving the reactive cysteines. Under reducing conditions zinc is bound to the reactive cysteines and the protein is inactive.

It is found in the cytoplasm. Its function is as follows. Redox regulated molecular chaperone. Protects both thermally unfolding and oxidatively damaged proteins from irreversible aggregation. Plays an important role in the bacterial defense system toward oxidative stress. The protein is 33 kDa chaperonin of Lacticaseibacillus casei (strain BL23) (Lactobacillus casei).